The chain runs to 637 residues: MASIEEIAHQIIEQQMGEISRSHTEVSQTALMDGTTQRIQLVPSESSVSVPQRIQIVTDPQTGQKIQIVTALDQSGTNKQFIFTNNDGSLPSKVILARQDSSQGKVFLTTPDAAGVNQLFFSTPDVPAQHIQILSDTQSLDQNLNKQFVELCVVCGDKASGRHYGAVTCEGCKGFFKRSIRKNLIYTCRGSKDCVINKHYRNRCQYCRLQRCISLGMKQDSVQCERKPIEVSREKSSNCAASTEKIYIRKDLRSPLAATTTFVTESKTSRTTSLLDSSMLVNIQQSGVKNESILLTPNKVEACQGDLSTLANVVTSLANLNKSKDLPQTNTEFSIIESLSNGDSSLSDLAQDDQSNSEVTRAFDTLAKALNQSENSTQGSSECVGSGSNLLPDVNVEIEGPLLNDVHIAFRLTMPSPMPEYLNVHYICESASRLLFLSMHWARSIPSFLSLGQENSISLVKACWNELFSLGLAQCCQVMNVETILAAFVNHLHNSMQHDKLSSDKVKLVMDHIFKLQEFCNSMVKRCVDGYEYAYLKAIALFSPDHPGLENVSHIEKLQEKAYMEFQDYVTKTYPEDTYRLSRLLLRLPALRLLNAAITEELFFAGLIGNVQIDSIIPYILRMETSDYNSQIIGLTA.

A DNA-binding region (nuclear receptor) is located at residues V149–C224. 2 NR C4-type zinc fingers span residues C152–C172 and C188–C207. The NR LBD domain occupies C383–E624.

Belongs to the nuclear hormone receptor family. NR2 subfamily.

The protein resides in the nucleus. In terms of biological role, orphan nuclear receptor. Binds the IR7 element in the promoter of its own gene in an autoregulatory negative feedback mechanism. Primarily repressor of a broad range of genes. Binds to hormone response elements (HREs) consisting of two 5'-AGGTCA-3' half site direct repeat consensus sequences. The chain is Nuclear receptor subfamily 2 group C member 1-B (nr2c1-b) from Xenopus laevis (African clawed frog).